Reading from the N-terminus, the 213-residue chain is Large ribosomal subunit protein uL3 (213 aa).

Glutamine 151 is modified (N5-methylglutamine).

The protein belongs to the universal ribosomal protein uL3 family. In terms of assembly, part of the 50S ribosomal subunit. Forms a cluster with proteins L14 and L19. Methylated by PrmB.

Its function is as follows. One of the primary rRNA binding proteins, it binds directly near the 3'-end of the 23S rRNA, where it nucleates assembly of the 50S subunit. In Rhizobium leguminosarum bv. trifolii (strain WSM2304), this protein is Large ribosomal subunit protein uL3.